A 1568-amino-acid polypeptide reads, in one-letter code: MAGVGAAALSLLLHLGALALAAGAEGGAVPREPPGQQTTAHSSVLAGNSQEQWHPLREWLGRLEAAVMELREQNKDLQTRVRQLESCECHPASPQCWGLGRAWPEGARWEPDACTACVCQDGAAHCGPQAHLPHCRGCSQNGQTYGNGETFSPDACTTCRCLTGAVQCQGPSCSELNCLESCTPPGECCPICRPGCDYEGQLYEEGVTFLSSSNPCLQCTCLRSRVRCMALKCPPSPCPEPVLRPGHCCPTCQGCTEGGSHWEHGQEWTTPGDPCRICRCLEGHIQCRQRECASLCPYPARPLPGTCCPVCDGCFLNGREHRSGEPVGSGDPCSHCRCANGSVQCEPLPCPPVPCRHPGKIPGQCCPVCDGCEYQGHQYQSQETFRLQERGLCVRCSCQAGEVSCEEQECPVTPCALPASGRQLCPACELDGEEFAEGVQWEPDGRPCTACVCQDGVPKCGAVLCPPAPCQHPTQPPGACCPSCDSCTYHSQVYANGQNFTDADSPCHACHCQDGTVTCSLVDCPPTTCARPQSGPGQCCPRCPDCILEEEVFVDGESFSHPRDPCQECRCQEGHAHCQPRPCPRAPCAHPLPGTCCPNDCSGCAFGGKEYPSGADFPHPSDPCRLCRCLSGNVQCLARRCVPLPCPEPVLLPGECCPQCPAAPAPAGCPRPGAAHARHQEYFSPPGDPCRRCLCLDGSVSCQRLPCPPAPCAHPRQGPCCPSCDGCLYQGKEFASGERFPSPTAACHLCLCWEGSVSCEPKACAPALCPFPARGDCCPDCDGCEYLGESYLSNQEFPDPREPCNLCTCLGGFVTCGRRPCEPPGCSHPLIPSGHCCPTCQGCRYHGVTTASGETLPDPLDPTCSLCTCQEGSMRCQKKPCPPALCPHPSPGPCFCPVCHSCLSQGREHQDGEEFEGPAGSCEWCRCQAGQVSCVRLQCPPLPCKLQVTERGSCCPRCRGCLAHGEEHPEGSRWVPPDSACSSCVCHEGVVTCARIQCISSCAQPRQGPHDCCPQCSDCEHEGRKYEPGESFQPGADPCEVCICEPQPEGPPSLRCHRRQCPSLVGCPPSQLLPPGPQHCCPTCAEALSNCSEGLLGSELAPPDPCYTCQCQDLTWLCIHQACPELSCPLSERHTPPGSCCPVCRAPTQSCVHQGREVASGERWTVDTCTSCSCMAGTVRCQSQRCSPLSCGPDKAPALSPGSCCPRCLPRPASCMAFGDPHYRTFDGRLLHFQGSCSYVLAKDCHSGDFSVHVTNDDRGRSGVAWTQEVAVLLGDMAVRLLQDGAVTVDGHPVALPFLQEPLLYVELRGHTVILHAQPGLQVLWDGQSQVEVSVPGSYQGRTCGLCGNFNGFAQDDLQGPEGLLLPSEAAFGNSWQVSEGLWPGRPCSAGREVDPCRAAGYRARREANARCGVLKSSPFSRCHAVVPPEPFFAACVYDLCACGPGSSADACLCDALEAYASHCRQAGVTPTWRGPTLCVVGCPLERGFVFDECGPPCPRTCFNQHIPLGELAAHCVRPCVPGCQCPAGLVEHEAHCIPPEACPQVLLTGDQPLGARPSPSREPQETP.

The N-terminal stretch at 1–23 is a signal peptide; sequence MAGVGAAALSLLLHLGALALAAG. Residues 27–49 form a disordered region; the sequence is GAVPREPPGQQTTAHSSVLAGNS. A compositionally biased stretch (polar residues) spans 35-49; it reads GQQTTAHSSVLAGNS. The stretch at 60 to 87 forms a coiled coil; sequence LGRLEAAVMELREQNKDLQTRVRQLESC. VWFC domains lie at 136–193, 194–253, 253–312, 312–370, 426–485, 485–544, 544–602, 602–661, 667–725, 725–782, 782–841, 900–959, 959–1017, 1017–1085, 1082–1145, and 1149–1209; these read RGCS…PICR, PGCD…PTCQ, QGCT…PVCD, DGCF…PVCD, PACE…PSCD, DSCT…PRCP, PDCI…NDCS, SGCA…PQCP, AGCP…PSCD, DGCL…PDCD, DGCE…PTCQ, HSCL…PRCR, RGCL…PQCS, SDCE…PTCA, PTCA…PVCR, and QSCV…PRCL. N-linked (GlcNAc...) asparagine glycosylation occurs at N340. Residue N499 is glycosylated (N-linked (GlcNAc...) asparagine). The N-linked (GlcNAc...) asparagine glycan is linked to N1090. Residues 1213–1389 enclose the VWFD domain; sequence ASCMAFGDPH…EGLWPGRPCS (177 aa). 2 cysteine pairs are disulfide-bonded: C1215-C1347 and C1237-C1388. In terms of domain architecture, TIL spans 1483 to 1543; it reads CPLERGFVFD…EAHCIPPEAC (61 aa).

Interacts with BMP7 and, by doing so, enhances binding to the type I receptors that contains cytoplasmic serine/threonine protein kinase domains. Also able to interact with activin-A and TGFB1.

The protein resides in the secreted. Its function is as follows. Enhances bone morphogenetic protein (BMP) signaling in a paracrine manner. In contrast, it inhibits both the activin-A and TGFB1-mediated signaling pathways. The sequence is that of Kielin/chordin-like protein from Homo sapiens (Human).